The chain runs to 320 residues: GTP 3',8-cyclase (320 aa).

The Radical SAM core domain occupies 5 to 225; sequence QFGRKINYLR…IQLIKKDEKA (221 aa). Arg14 is a GTP binding site. [4Fe-4S] cluster is bound by residues Cys21 and Cys25. An S-adenosyl-L-methionine-binding site is contributed by Tyr27. Cys28 contributes to the [4Fe-4S] cluster binding site. A GTP-binding site is contributed by Arg64. Position 68 (Gly68) interacts with S-adenosyl-L-methionine. Thr95 provides a ligand contact to GTP. Ser119 is an S-adenosyl-L-methionine binding site. A GTP-binding site is contributed by Lys155. Met189 contributes to the S-adenosyl-L-methionine binding site. Residues Cys248 and Cys251 each coordinate [4Fe-4S] cluster. 253–255 contacts GTP; sequence RIR. [4Fe-4S] cluster is bound at residue Cys265.

This sequence belongs to the radical SAM superfamily. MoaA family. Monomer and homodimer. [4Fe-4S] cluster serves as cofactor.

The catalysed reaction is GTP + AH2 + S-adenosyl-L-methionine = (8S)-3',8-cyclo-7,8-dihydroguanosine 5'-triphosphate + 5'-deoxyadenosine + L-methionine + A + H(+). It participates in cofactor biosynthesis; molybdopterin biosynthesis. Its function is as follows. Catalyzes the cyclization of GTP to (8S)-3',8-cyclo-7,8-dihydroguanosine 5'-triphosphate. This chain is GTP 3',8-cyclase, found in Campylobacter jejuni subsp. jejuni serotype O:6 (strain 81116 / NCTC 11828).